The sequence spans 415 residues: Erythronolide mycarosyltransferase (415 aa).

The protein belongs to the glycosyltransferase 28 family.

The catalysed reaction is dTDP-beta-L-mycarose + erythronolide B = 3-O-alpha-L-mycarosylerythronolide B + dTDP + H(+). Functionally, involved in the biosynthesis of the macrolide antibiotic erythromycin. Catalyzes the reversible transfer of mycarosyl from dTDP-beta-L-mycarose to erythronolide B to yield 3-alpha-L-mycarosylerythronolide B. It can also use TDP-beta-L-cladinose. The sequence is that of Erythronolide mycarosyltransferase from Saccharopolyspora erythraea (Streptomyces erythraeus).